The primary structure comprises 182 residues: MVNVSIARRYARALLDVASEAGRTDAVAEQLTAFADVIAKNAELTDVLVNPAYTREQRLRVVESVMQAIPGGVEATLANTLRLLVDRNRLGYLADIARLFRDMADARAGRVRGHVTSAAPLPADALAQLQQTLQQLTQRNVLLETRVDPSLLGGVSAQVGSILYDGSIRTQLEEMRRELKQR.

The protein belongs to the ATPase delta chain family. F-type ATPases have 2 components, F(1) - the catalytic core - and F(0) - the membrane proton channel. F(1) has five subunits: alpha(3), beta(3), gamma(1), delta(1), epsilon(1). F(0) has three main subunits: a(1), b(2) and c(10-14). The alpha and beta chains form an alternating ring which encloses part of the gamma chain. F(1) is attached to F(0) by a central stalk formed by the gamma and epsilon chains, while a peripheral stalk is formed by the delta and b chains.

The protein resides in the cell inner membrane. Its function is as follows. F(1)F(0) ATP synthase produces ATP from ADP in the presence of a proton or sodium gradient. F-type ATPases consist of two structural domains, F(1) containing the extramembraneous catalytic core and F(0) containing the membrane proton channel, linked together by a central stalk and a peripheral stalk. During catalysis, ATP synthesis in the catalytic domain of F(1) is coupled via a rotary mechanism of the central stalk subunits to proton translocation. Functionally, this protein is part of the stalk that links CF(0) to CF(1). It either transmits conformational changes from CF(0) to CF(1) or is implicated in proton conduction. The sequence is that of ATP synthase subunit delta from Myxococcus xanthus (strain DK1622).